Here is a 247-residue protein sequence, read N- to C-terminus: V-type proton ATPase subunit D (247 aa).

The protein belongs to the V-ATPase D subunit family. As to quaternary structure, V-ATPase is a heteromultimeric enzyme made up of two complexes: the ATP-hydrolytic V1 complex and the proton translocation V0 complex. The V1 complex consists of three catalytic AB heterodimers that form a heterohexamer, three peripheral stalks each consisting of EG heterodimers, one central rotor including subunits D and F, and the regulatory subunits C and H. The proton translocation complex V0 consists of the proton transport subunit a, a ring of proteolipid subunits c9c'', rotary subunit d, subunits e and f, and the accessory subunits ATP6AP1/Ac45 and ATP6AP2/PRR. Interacts with SNX10.

The protein resides in the membrane. It is found in the cytoplasmic vesicle. Its subcellular location is the clathrin-coated vesicle membrane. It localises to the cytoplasm. The protein localises to the cytoskeleton. The protein resides in the microtubule organizing center. It is found in the centrosome. Its subcellular location is the cell projection. It localises to the cilium. Its function is as follows. Subunit of the V1 complex of vacuolar(H+)-ATPase (V-ATPase), a multisubunit enzyme composed of a peripheral complex (V1) that hydrolyzes ATP and a membrane integral complex (V0) that translocates protons. V-ATPase is responsible for acidifying and maintaining the pH of intracellular compartments and in some cell types, is targeted to the plasma membrane, where it is responsible for acidifying the extracellular environment. May play a role in cilium biogenesis through regulation of the transport and the localization of proteins to the cilium. The chain is V-type proton ATPase subunit D (Atp6v1d) from Mus musculus (Mouse).